Reading from the N-terminus, the 96-residue chain is Mitochondrial import inner membrane translocase subunit Tim13-B (96 aa).

A Twin CX3C motif motif is present at residues 47 to 70; the sequence is CFRKCIGKPGGSLDNSEQKCVAMC. 2 disulfide bridges follow: cysteine 47–cysteine 70 and cysteine 51–cysteine 66.

This sequence belongs to the small Tim family. In terms of assembly, heterohexamer; composed of 3 copies of TIMM8 (TIMM8A or TIMM8B) and 3 copies of TIMM13, named soluble 70 kDa complex. Associates with the TIM22 complex, whose core is composed of TIMM22.

The protein resides in the mitochondrion inner membrane. In terms of biological role, mitochondrial intermembrane chaperone that participates in the import and insertion of some multi-pass transmembrane proteins into the mitochondrial inner membrane. Also required for the transfer of beta-barrel precursors from the TOM complex to the sorting and assembly machinery (SAM complex) of the outer membrane. Acts as a chaperone-like protein that protects the hydrophobic precursors from aggregation and guide them through the mitochondrial intermembrane space. The TIMM8-TIMM13 complex mediates the import of some proteins while the predominant TIMM9-TIMM10 70 kDa complex mediates the import of much more proteins. This is Mitochondrial import inner membrane translocase subunit Tim13-B (timm13-b) from Xenopus laevis (African clawed frog).